The primary structure comprises 596 residues: Elongation factor 4 (596 aa).

In terms of domain architecture, tr-type G spans 2–184 (KQIRNFSIIA…VIVAKIPPPE (183 aa)). GTP is bound by residues 14–19 (DHGKST) and 131–134 (NKID).

This sequence belongs to the TRAFAC class translation factor GTPase superfamily. Classic translation factor GTPase family. LepA subfamily.

It localises to the cell inner membrane. It catalyses the reaction GTP + H2O = GDP + phosphate + H(+). Functionally, required for accurate and efficient protein synthesis under certain stress conditions. May act as a fidelity factor of the translation reaction, by catalyzing a one-codon backward translocation of tRNAs on improperly translocated ribosomes. Back-translocation proceeds from a post-translocation (POST) complex to a pre-translocation (PRE) complex, thus giving elongation factor G a second chance to translocate the tRNAs correctly. Binds to ribosomes in a GTP-dependent manner. The polypeptide is Elongation factor 4 (Shewanella baltica (strain OS223)).